Reading from the N-terminus, the 260-residue chain is Cytosolic Fe-S cluster assembly factor Nubp2 homolog (260 aa).

14–21 (GKGGVGKS) lines the ATP pocket. [4Fe-4S] cluster is bound by residues cysteine 188 and cysteine 191.

This sequence belongs to the Mrp/NBP35 ATP-binding proteins family. NUBP2/CFD1 subfamily. Heterotetramer of 2 Nubp1 and 2 Nubp2 chains. It depends on [4Fe-4S] cluster as a cofactor.

It localises to the cytoplasm. Functionally, component of the cytosolic iron-sulfur (Fe/S) protein assembly (CIA) machinery. Required for maturation of extramitochondrial Fe-S proteins. The Nubp1-Nubp2 heterotetramer forms a Fe-S scaffold complex, mediating the de novo assembly of an Fe-S cluster and its transfer to target apoproteins. The polypeptide is Cytosolic Fe-S cluster assembly factor Nubp2 homolog (Drosophila erecta (Fruit fly)).